A 382-amino-acid polypeptide reads, in one-letter code: Cytochrome b (382 aa).

4 helical membrane-spanning segments follow: residues 33 to 53 (FGSL…FLAM), 77 to 98 (WLVR…YTHI), 113 to 133 (WTVG…GYVL), and 178 to 198 (FFAF…IHLL). 2 residues coordinate heme b: His83 and His97. His182 and His196 together coordinate heme b. Position 201 (His201) interacts with a ubiquinone. Transmembrane regions (helical) follow at residues 226 to 246 (LKDL…ALLT), 288 to 308 (LGGV…PFLQ), 320 to 340 (LTQL…WIGG), and 347 to 367 (FVSI…IIIP).

This sequence belongs to the cytochrome b family. In terms of assembly, the cytochrome bc1 complex contains 3 respiratory subunits (MT-CYB, CYC1 and UQCRFS1), 2 core proteins (UQCRC1 and UQCRC2) and probably 6 low-molecular weight proteins. Heme b serves as cofactor.

The protein resides in the mitochondrion inner membrane. Its function is as follows. Component of the ubiquinol-cytochrome c reductase complex (complex III or cytochrome b-c1 complex) that is part of the mitochondrial respiratory chain. The b-c1 complex mediates electron transfer from ubiquinol to cytochrome c. Contributes to the generation of a proton gradient across the mitochondrial membrane that is then used for ATP synthesis. This chain is Cytochrome b (mt-cyb), found in Sigmops gracilis (Slender fangjaw).